A 500-amino-acid chain; its full sequence is MTTDQHQEILRTEGLSKFFPGVKALDNVDFSLRRGEIMALLGENGAGKSTLIKALTGVYHADRGTIWLEGQAISPKNTAHAQQLGIGTVYQEVNLLPNMSVADNLFIGREPKRFGLLRRKEMEKRATELMASYGFSLDVREPLNRFSVAMQQIVAICRAIDLSAKVLILDEPTASLDTQEVELLFDLMRQLRDRGVSLIFVTHFLDQVYQVSDRITVLRNGSFVGCRETCELPQIELVKMMLGRELDTHALQRAGRTLLSDKPVAAFKNYGKKGTIAPFDLEVRPGEIVGLAGLLGSGRTETAEVIFGIKPADSGTALIKGKPQNLRSPHQASVLGIGFCPEDRKTDGIIAAASVRENIILALQARRGWLRPISRKEQQEIAERFIRQLGIRTPSTEQPIEFLSGGNQQKVLLSRWLLTRPQFLILDEPTRGIDVGAHAEIIRLIETLCADGLALLVISSELEELVGYADRVIIMRDRKQVAEIPLAELSVPAIMNAIAA.

ABC transporter domains lie at 10–245 (LRTE…LGRE) and 259–497 (LSDK…IMNA). 42–49 (GENGAGKS) is an ATP binding site.

Belongs to the ABC transporter superfamily. In terms of assembly, the complex is composed of two ATP-binding proteins (YtfR), two transmembrane proteins (YtfT and YjfF) and a solute-binding protein (YtfQ).

The protein resides in the cell inner membrane. The enzyme catalyses D-galactofuranose(out) + ATP + H2O = D-galactofuranose(in) + ADP + phosphate + H(+). Its function is as follows. Part of the ABC transporter complex YtfQRT-YjfF involved in galactofuranose transport. Responsible for energy coupling to the transport system. The polypeptide is Galactofuranose transporter ATP-binding protein YtfR (ytfR) (Escherichia coli O157:H7).